Consider the following 352-residue polypeptide: Uroporphyrinogen decarboxylase (352 aa).

Substrate contacts are provided by residues 26–30 (RQAGR), aspartate 76, tyrosine 153, serine 208, and histidine 323.

The protein belongs to the uroporphyrinogen decarboxylase family. Homodimer.

Its subcellular location is the cytoplasm. The enzyme catalyses uroporphyrinogen III + 4 H(+) = coproporphyrinogen III + 4 CO2. Its pathway is porphyrin-containing compound metabolism; protoporphyrin-IX biosynthesis; coproporphyrinogen-III from 5-aminolevulinate: step 4/4. Functionally, catalyzes the decarboxylation of four acetate groups of uroporphyrinogen-III to yield coproporphyrinogen-III. The sequence is that of Uroporphyrinogen decarboxylase from Synechococcus sp. (strain CC9902).